A 676-amino-acid chain; its full sequence is Zinc finger protein 418 (676 aa).

The 87-residue stretch at 5 to 91 (VAFEDVAVNF…HSCEMCGAIL (87 aa)) folds into the KRAB domain. 16 C2H2-type zinc fingers span residues 82 to 105 (HSCE…GTHH), 230 to 252 (CYCW…QRVH), 258 to 280 (YECG…QRVH), 286 to 308 (YECG…QRVH), 314 to 336 (YECG…QRVH), 342 to 364 (YECE…QRGH), 370 to 392 (YECE…HRVH), 398 to 420 (YECG…QRGH), 426 to 448 (YECG…QRSH), 454 to 476 (YECR…QRVH), 482 to 504 (YECN…QRVH), 510 to 532 (FECS…RRVH), 538 to 560 (YECG…QKTH), 591 to 613 (YECR…QRLH), 619 to 641 (YECS…RRVH), and 647 to 669 (YECS…QRVH).

The protein belongs to the krueppel C2H2-type zinc-finger protein family. As to expression, highly expressed in heart.

It is found in the nucleus. Transcriptional repressor. May play a role as regulator of the ubiquitin-proteasome system and autophagy-lysosomal pathway. The polypeptide is Zinc finger protein 418 (ZNF418) (Homo sapiens (Human)).